Consider the following 122-residue polypeptide: Large ribosomal subunit protein uL14 (122 aa).

The protein belongs to the universal ribosomal protein uL14 family. Part of the 50S ribosomal subunit. Forms a cluster with proteins L3 and L19. In the 70S ribosome, L14 and L19 interact and together make contacts with the 16S rRNA in bridges B5 and B8.

Functionally, binds to 23S rRNA. Forms part of two intersubunit bridges in the 70S ribosome. The polypeptide is Large ribosomal subunit protein uL14 (Shewanella baltica (strain OS223)).